A 473-amino-acid polypeptide reads, in one-letter code: Ribonuclease Y (473 aa).

Residues 4–24 (LIAFIILLILFVLLITIVPVV) form a helical membrane-spanning segment. A KH domain is found at 158–218 (SLFNIDIIDE…IRREIARIVM (61 aa)). Residues 285–378 (ILSHSLEVAE…VKIVDTLSAA (94 aa)) form the HD domain.

This sequence belongs to the RNase Y family.

It is found in the cell membrane. Its function is as follows. Endoribonuclease that initiates mRNA decay. The protein is Ribonuclease Y of Ureaplasma parvum serovar 3 (strain ATCC 27815 / 27 / NCTC 11736).